A 212-amino-acid polypeptide reads, in one-letter code: Methylthioribulose-1-phosphate dehydratase (212 aa).

Zn(2+) is bound by residues His97 and His99.

It belongs to the aldolase class II family. MtnB subfamily. In terms of assembly, homotetramer. Requires Zn(2+) as cofactor.

It carries out the reaction 5-(methylsulfanyl)-D-ribulose 1-phosphate = 5-methylsulfanyl-2,3-dioxopentyl phosphate + H2O. The protein operates within amino-acid biosynthesis; L-methionine biosynthesis via salvage pathway; L-methionine from S-methyl-5-thio-alpha-D-ribose 1-phosphate: step 2/6. Functionally, catalyzes the dehydration of methylthioribulose-1-phosphate (MTRu-1-P) into 2,3-diketo-5-methylthiopentyl-1-phosphate (DK-MTP-1-P). This chain is Methylthioribulose-1-phosphate dehydratase, found in Bacillus cereus (strain G9842).